Reading from the N-terminus, the 188-residue chain is Mediator of RNA polymerase II transcription subunit 29 (188 aa).

Composition is skewed to low complexity over residues 1–23 (MNPN…QSSP) and 30–43 (VQHQ…PLQQ). The disordered stretch occupies residues 1–43 (MNPNMNMMPMSGPQMMQVMQSSPSGPPGPVQHQQQQPPQPLQQ).

The protein belongs to the Mediator complex subunit 29 family. Component of the Mediator complex. Self-associates. Interacts with dsx.

Its subcellular location is the nucleus. In terms of biological role, component of the Mediator complex, a coactivator involved in the regulated transcription of nearly all RNA polymerase II-dependent genes. Mediator functions as a bridge to convey information from gene-specific regulatory proteins to the basal RNA polymerase II transcription machinery. Mediator is recruited to promoters by direct interactions with regulatory proteins and serves as a scaffold for the assembly of a functional preinitiation complex with RNA polymerase II and the general transcription factors. Required for female somatic sexual development. The sequence is that of Mediator of RNA polymerase II transcription subunit 29 (ix) from Drosophila melanogaster (Fruit fly).